The sequence spans 346 residues: Probable long-chain-alcohol O-fatty-acyltransferase 6 (346 aa).

Transmembrane regions (helical) follow at residues 7 to 27 (LFIQ…YLTP), 36 to 56 (LLSV…FSTV), 59 to 79 (SFTI…LFAL), 116 to 136 (FPKW…LQAY), 146 to 166 (FLLG…LTLI), 228 to 248 (FFAI…LYFY), 255 to 275 (TWEV…EVAL), and 289 to 309 (PAVS…WLFS).

It belongs to the wax synthase family.

It is found in the membrane. The enzyme catalyses a long chain fatty alcohol + a fatty acyl-CoA = a wax ester + CoA. Functionally, catalyzes the final step in the synthesis of long-chain linear esters (waxes). In Arabidopsis thaliana (Mouse-ear cress), this protein is Probable long-chain-alcohol O-fatty-acyltransferase 6 (AT6).